The primary structure comprises 25 residues: Oxyopinin-3c (25 aa).

In terms of tissue distribution, expressed by the venom gland.

It localises to the secreted. May have cytolytic and antimicrobial activity. The polypeptide is Oxyopinin-3c (Oxyopes takobius (Lynx spider)).